A 146-amino-acid chain; its full sequence is Aminoglycoside N(6')-acetyltransferase type 1 (146 aa).

The N-acetyltransferase domain occupies 1 to 146; it reads MIVICDHDNL…RVVFYRKTLG (146 aa). Residues W21, Y66, E79, and D115 each coordinate substrate. N120 serves as a coordination point for acetyl-CoA. Position 136 (E136) interacts with substrate.

In terms of assembly, homodimer.

The enzyme catalyses kanamycin B + acetyl-CoA = N(6')-acetylkanamycin B + CoA + H(+). Functionally, catalyzes the transfer of an acetyl group from acetyl-CoA to the 6'-amino group of aminoglycoside molecules conferring resistance to antibiotics containing the purpurosamine ring including amikacin, tobramycin, netilmicin, isepamicin and sisomicin. This Serratia marcescens protein is Aminoglycoside N(6')-acetyltransferase type 1.